Consider the following 85-residue polypeptide: Protein RnfH (85 aa).

It belongs to the UPF0125 (RnfH) family.

The chain is Protein RnfH from Cereibacter sphaeroides (strain ATCC 17023 / DSM 158 / JCM 6121 / CCUG 31486 / LMG 2827 / NBRC 12203 / NCIMB 8253 / ATH 2.4.1.) (Rhodobacter sphaeroides).